The chain runs to 117 residues: Ribosome-binding factor A (117 aa).

It belongs to the RbfA family. Monomer. Binds 30S ribosomal subunits, but not 50S ribosomal subunits or 70S ribosomes.

The protein localises to the cytoplasm. In terms of biological role, one of several proteins that assist in the late maturation steps of the functional core of the 30S ribosomal subunit. Associates with free 30S ribosomal subunits (but not with 30S subunits that are part of 70S ribosomes or polysomes). Required for efficient processing of 16S rRNA. May interact with the 5'-terminal helix region of 16S rRNA. This chain is Ribosome-binding factor A, found in Leptospira interrogans serogroup Icterohaemorrhagiae serovar Lai (strain 56601).